The primary structure comprises 519 residues: Cytochrome P450 4A22 (519 aa).

The propeptide occupies Met-1–Ser-4. Residue Glu-321 participates in heme binding. Ser-440 carries the phosphoserine modification. Residue Cys-457 coordinates heme.

It belongs to the cytochrome P450 family.

The protein localises to the endoplasmic reticulum membrane. Its subcellular location is the microsome membrane. It carries out the reaction an omega-methyl-long-chain fatty acid + reduced [NADPH--hemoprotein reductase] + O2 = an omega-hydroxy-long-chain fatty acid + oxidized [NADPH--hemoprotein reductase] + H2O + H(+). Its function is as follows. Catalyzes the omega- and (omega-1)-hydroxylation of various fatty acids such as laurate and palmitate. Shows no activity towards arachidonic acid and prostaglandin A1. Lacks functional activity in the kidney and does not contribute to renal 20-hydroxyeicosatetraenoic acid (20-HETE) biosynthesis. The polypeptide is Cytochrome P450 4A22 (CYP4A22) (Homo sapiens (Human)).